Here is a 273-residue protein sequence, read N- to C-terminus: Vacuolar membrane protein YPL162C (273 aa).

Residues 1-13 (MYVSNGKDTCQLL) are Vacuolar-facing. A helical membrane pass occupies residues 14-34 (GPVSLFVQTLMGMTAVIVLLV). Residues 35–51 (KRNYEHPRRKMIVWSYD) lie on the Cytoplasmic side of the membrane. The helical transmembrane segment at 52 to 72 (IGKQIIGSLGIHFLNLGISIL) threads the bilayer. The Vacuolar portion of the chain corresponds to 73 to 97 (KKRRRSLFAITAKGNDDEDQCDWYF). A helical transmembrane segment spans residues 98–118 (LNLLLDTTVGIPILWLCLYII). Residues 119–156 (EKVLKSLHFQNIESGNYFPSKTVGSHPRKPLFSAFVKQ) are Cytoplasmic-facing. The helical transmembrane segment at 157–177 (LLIFIVGLGVMKFCVFLILNY) threads the bilayer. Over 178-198 (LEDLAYWFADLILGWSDSWPN) the chain is Vacuolar. A helical transmembrane segment spans residues 199 to 219 (FQVFLVMFVFPILLNCFQYFC). Residues 220-273 (VDNVIRLHSESLTITNAENFETNTFLNDEIPDLSEVSNEVPNKDNNISSYGSII) lie on the Cytoplasmic side of the membrane.

It is found in the vacuole membrane. This Saccharomyces cerevisiae (strain ATCC 204508 / S288c) (Baker's yeast) protein is Vacuolar membrane protein YPL162C.